Reading from the N-terminus, the 170-residue chain is Phosphopantetheine adenylyltransferase (170 aa).

Threonine 17 provides a ligand contact to substrate. ATP contacts are provided by residues threonine 17–phenylalanine 18 and histidine 25. The substrate site is built by lysine 49, leucine 81, and arginine 95. Residues glycine 96–arginine 98, glutamate 106, and leucine 131–threonine 137 each bind ATP.

The protein belongs to the bacterial CoaD family. Homohexamer. Requires Mg(2+) as cofactor.

It localises to the cytoplasm. It carries out the reaction (R)-4'-phosphopantetheine + ATP + H(+) = 3'-dephospho-CoA + diphosphate. It functions in the pathway cofactor biosynthesis; coenzyme A biosynthesis; CoA from (R)-pantothenate: step 4/5. Reversibly transfers an adenylyl group from ATP to 4'-phosphopantetheine, yielding dephospho-CoA (dPCoA) and pyrophosphate. The protein is Phosphopantetheine adenylyltransferase of Legionella pneumophila subsp. pneumophila (strain Philadelphia 1 / ATCC 33152 / DSM 7513).